Reading from the N-terminus, the 62-residue chain is Photosystem II reaction center protein Z (62 aa).

The next 2 membrane-spanning stretches (helical) occupy residues 8-28 and 41-61; these read ALFA…VILA and FSGA…NSFI.

Belongs to the PsbZ family. As to quaternary structure, PSII is composed of 1 copy each of membrane proteins PsbA, PsbB, PsbC, PsbD, PsbE, PsbF, PsbH, PsbI, PsbJ, PsbK, PsbL, PsbM, PsbT, PsbY, PsbZ, Psb30/Ycf12, at least 3 peripheral proteins of the oxygen-evolving complex and a large number of cofactors. It forms dimeric complexes.

The protein resides in the plastid. Its subcellular location is the chloroplast thylakoid membrane. May control the interaction of photosystem II (PSII) cores with the light-harvesting antenna, regulates electron flow through the 2 photosystem reaction centers. PSII is a light-driven water plastoquinone oxidoreductase, using light energy to abstract electrons from H(2)O, generating a proton gradient subsequently used for ATP formation. The polypeptide is Photosystem II reaction center protein Z (Chara vulgaris (Common stonewort)).